The following is a 60-amino-acid chain: Large ribosomal subunit protein bL33 (60 aa).

Belongs to the bacterial ribosomal protein bL33 family.

This is Large ribosomal subunit protein bL33 from Chlorobium chlorochromatii (strain CaD3).